A 305-amino-acid polypeptide reads, in one-letter code: Tyrosine recombinase XerC (305 aa).

Positions asparagine 2 to glutamate 88 constitute a Core-binding (CB) domain. The 186-residue stretch at proline 109–methionine 294 folds into the Tyr recombinase domain. Catalysis depends on residues arginine 149, lysine 173, histidine 246, arginine 249, and histidine 272. Tyrosine 281 (O-(3'-phospho-DNA)-tyrosine intermediate) is an active-site residue.

Belongs to the 'phage' integrase family. XerC subfamily. Forms a cyclic heterotetrameric complex composed of two molecules of XerC and two molecules of XerD.

Its subcellular location is the cytoplasm. Site-specific tyrosine recombinase, which acts by catalyzing the cutting and rejoining of the recombining DNA molecules. The XerC-XerD complex is essential to convert dimers of the bacterial chromosome into monomers to permit their segregation at cell division. It also contributes to the segregational stability of plasmids. The sequence is that of Tyrosine recombinase XerC from Oceanobacillus iheyensis (strain DSM 14371 / CIP 107618 / JCM 11309 / KCTC 3954 / HTE831).